The chain runs to 112 residues: uncharacterized protein (112 aa).

Fe cation is bound by residues Cys-39, Cys-105, and Cys-107.

This sequence belongs to the HesB/IscA family. Ycf83 subfamily.

The protein localises to the plastid. Its subcellular location is the chloroplast. This is an uncharacterized protein from Galdieria sulphuraria (Red alga).